A 311-amino-acid polypeptide reads, in one-letter code: NAD kinase (311 aa).

Residue Asp89 is the Proton acceptor of the active site. NAD(+) is bound by residues 89-90 (DG), Arg94, 163-164 (NE), Asp193, and 204-209 (TAYAFS).

Belongs to the NAD kinase family. Requires a divalent metal cation as cofactor.

It localises to the cytoplasm. The catalysed reaction is NAD(+) + ATP = ADP + NADP(+) + H(+). In terms of biological role, involved in the regulation of the intracellular balance of NAD and NADP, and is a key enzyme in the biosynthesis of NADP. Catalyzes specifically the phosphorylation on 2'-hydroxyl of the adenosine moiety of NAD to yield NADP. The polypeptide is NAD kinase (Mycobacterium leprae (strain Br4923)).